Consider the following 452-residue polypeptide: Pup--protein ligase (452 aa).

A Mg(2+)-binding site is contributed by Glu-9. Arg-53 is a binding site for ATP. Tyr-55 contacts Mg(2+). Residue Asp-57 is the Proton acceptor of the active site. Glu-63 contacts Mg(2+). The ATP site is built by Thr-66 and Trp-419.

The protein belongs to the Pup ligase/Pup deamidase family. Pup-conjugating enzyme subfamily.

It carries out the reaction ATP + [prokaryotic ubiquitin-like protein]-L-glutamate + [protein]-L-lysine = ADP + phosphate + N(6)-([prokaryotic ubiquitin-like protein]-gamma-L-glutamyl)-[protein]-L-lysine.. Its pathway is protein degradation; proteasomal Pup-dependent pathway. It participates in protein modification; protein pupylation. Functionally, catalyzes the covalent attachment of the prokaryotic ubiquitin-like protein modifier Pup to the proteasomal substrate proteins, thereby targeting them for proteasomal degradation. This tagging system is termed pupylation. The ligation reaction involves the side-chain carboxylate of the C-terminal glutamate of Pup and the side-chain amino group of a substrate lysine. The polypeptide is Pup--protein ligase (Mycobacterium ulcerans (strain Agy99)).